Here is an 83-residue protein sequence, read N- to C-terminus: MALKREIQGVVLQKAGDKTATILVERRVMHPRYHKFVKRFKKYLVHDEKNETNAGDTIVAVECRPLSARKSFRLKAIVAKGVE.

This sequence belongs to the universal ribosomal protein uS17 family. As to quaternary structure, part of the 30S ribosomal subunit.

Functionally, one of the primary rRNA binding proteins, it binds specifically to the 5'-end of 16S ribosomal RNA. The polypeptide is Small ribosomal subunit protein uS17 (Campylobacter curvus (strain 525.92)).